The primary structure comprises 1034 residues: MGSKRIIPSRHRSLSTYEVMFTALFAILMVLCAGLIAVSWLTIKGSEKDAALGKSHEARGTMKITSGVTYNPNLQDKLSVDFKVLAFDIQQMIGEIFQSSNLKNEYKNSRVLQFENGSVIVIFDLLFAQWVSDENIKEELIQGIEANKSSQLVAFHIDVNSIDITESLENYSTTSPSTTSDKLTTSSPPATPGNVSIECLPGSRPCADALKCIAVDLFCDGELNCPDGSDEDSKICATACDGKFLLTESSGSFDAAQYPKLSEASVVCQWIIRVNQGLSIELNFSYFNTYSMDVLNIYEGVGSSKILRASLWLMNPGTIRIFSNQVTVTFLIESDENDYIGFNATYTAFNSTELNNDEKINCNFEDGFCFWIQDLNDDNEWERIQGTTFPPFTGPNFDHTFGNASGFYISTPTGPGGRQERVGLLSLPLEPTLEPVCLSFWYYMYGENVYKLSINISNDQNIEKIIFQKEGNYGENWNYGQVTLNETVEFKVAFNAFKNQFLSDIALDDISLTYGICNVSLYPEPTLVPTSPPELPTDCGGPFELWEPNTTFTSMNFPNNYPNQAFCVWNLNAQKGKNIQLHFEEFDLENIADVVEIRDGEEDDSLLLAVYTGPGPVEDVFSTTNRMTVLFITNDALTKGGFKANFTTGYHLGIPEPCKEDNFQCENGECVLLVNLCDGFSHCKDGSDEAHCVRFLNGTANNSGLVQFRIQSIWHTACAENWTTQTSDDVCQLLGLGTGNSSMPFFSSGGGPFVKLNTAPNGSLILTASEQCFEDSLILLQCNHKSCGKKQVAQEVSPKIVGGNDSREGAWPWVVALYYNGQLLCGASLVSRDWLVSAAHCVYGRNLEPSKWKAILGLHMTSNLTSPQIVTRLIDEIVINPHYNRRRKDSDIAMMHLEFKVNYTDYIQPICLPEENQVFPPGRICSIAGWGKVIYQGSPADILQEADVPLLSNEKCQQQMPEYNITENMMCAGYEEGGIDSCQGDSGGPLMCLENNRWLLAGVTSFGYQCALPNRPGVYARVPKFTEWIQSFLH.

Positions 1–51 (MGSKRIIPSRHRSLSTYEVMFTALFAILMVLCAGLIAVSWLTIKGSEKDAA) are excised as a propeptide. Topologically, residues 2–18 (GSKRIIPSRHRSLSTYE) are cytoplasmic. A helical; Signal-anchor for type II membrane protein membrane pass occupies residues 19–47 (VMFTALFAILMVLCAGLIAVSWLTIKGSE). Topologically, residues 48-1034 (KDAALGKSHE…FTEWIQSFLH (987 aa)) are extracellular. The SEA domain occupies 54-169 (KSHEARGTMK…NSIDITESLE (116 aa)). Residues Asn116, Asn147, Asn170, and Asn194 are each glycosylated (N-linked (GlcNAc...) asparagine). In terms of domain architecture, LDL-receptor class A 1 spans 197–238 (IECLPGSRPCADALKCIAVDLFCDGELNCPDGSDEDSKICAT). Cystine bridges form between Cys199-Cys212, Cys206-Cys225, Cys219-Cys236, and Cys240-Cys268. The region spanning 240–349 (CDGKFLLTES…IGFNATYTAF (110 aa)) is the CUB 1 domain. 9 N-linked (GlcNAc...) asparagine glycosylation sites follow: Asn283, Asn343, Asn350, Asn403, Asn455, Asn485, Asn518, Asn549, and Asn645. An MAM domain is found at 357–519 (DEKINCNFED…ISLTYGICNV (163 aa)). The cysteines at positions 539 and 567 are disulfide-linked. The CUB 2 domain maps to 539–649 (CGGPFELWEP…GGFKANFTTG (111 aa)). The region spanning 656–694 (EPCKEDNFQCENGECVLLVNLCDGFSHCKDGSDEAHCVR) is the LDL-receptor class A 2 domain. Intrachain disulfides connect Cys658–Cys670, Cys665–Cys683, and Cys677–Cys692. The SRCR domain maps to 693 to 786 (VRFLNGTANN…LILLQCNHKS (94 aa)). 5 N-linked (GlcNAc...) asparagine glycosylation sites follow: Asn697, Asn701, Asn721, Asn740, and Asn761. Cystine bridges form between Cys772–Cys782, Cys787–Cys911, Cys825–Cys841, Cys925–Cys992, Cys956–Cys971, and Cys982–Cys1010. A Peptidase S1 domain is found at 800 to 1034 (IVGGNDSREG…FTEWIQSFLH (235 aa)). Asn804 carries an N-linked (GlcNAc...) asparagine glycan. His840 functions as the Charge relay system in the catalytic mechanism. Asn863 is a glycosylation site (N-linked (GlcNAc...) asparagine). Asp891 acts as the Charge relay system in catalysis. Residues Asn902 and Asn964 are each glycosylated (N-linked (GlcNAc...) asparagine). Ser986 functions as the Charge relay system in the catalytic mechanism.

It belongs to the peptidase S1 family. As to quaternary structure, heterotrimer of a catalytic (light) chain, a multidomain (heavy) chain, and a mini chain. Post-translationally, the chains are derived from a single precursor that is cleaved by a trypsin-like protease. In terms of processing, the mini chain may be cleaved by elastase.

It localises to the membrane. It catalyses the reaction Activation of trypsinogen by selective cleavage of 6-Lys-|-Ile-7 bond.. Functionally, responsible for initiating activation of pancreatic proteolytic proenzymes (trypsin, chymotrypsin and carboxypeptidase A). It catalyzes the conversion of trypsinogen to trypsin which in turn activates other proenzymes including chymotrypsinogen, procarboxypeptidases, and proelastases. The protein is Enteropeptidase (TMPRSS15) of Sus scrofa (Pig).